Consider the following 432-residue polypeptide: Cytochrome c biogenesis protein CcsB (432 aa).

A run of 3 helical transmembrane segments spans residues 14–34 (LRIAIGLLFVIALSSALGTAI), 72–92 (SSWFLALLAWLGLALILCSWR), and 162–182 (VGPMLVHLGLVLLMLGAVWGS).

Belongs to the Ccs1/CcsB family. In terms of assembly, may interact with CcsA.

It localises to the cellular thylakoid membrane. In terms of biological role, required during biogenesis of c-type cytochromes (cytochrome c6 and cytochrome f) at the step of heme attachment. The polypeptide is Cytochrome c biogenesis protein CcsB (Prochlorococcus marinus (strain MIT 9303)).